We begin with the raw amino-acid sequence, 329 residues long: Peroxidase 30 (329 aa).

A signal peptide spans 1–27; it reads MKTMTQLNIAVVVVVTVLIGMLRSSEA. Disulfide bonds link C38–C116, C71–C76, C122–C324, and C201–C234. H69 acts as the Proton acceptor in catalysis. 5 residues coordinate Ca(2+): D70, V73, G75, D77, and S79. N83 and N155 each carry an N-linked (GlcNAc...) asparagine glycan. Positions 141–165 are disordered; it reads SWSVPTGRRDGRISNKTEATNNIPP. Polar residues predominate over residues 156–165; sequence KTEATNNIPP. P164 lines the substrate pocket. N169 carries an N-linked (GlcNAc...) asparagine glycan. H194 contributes to the heme b binding site. T195 provides a ligand contact to Ca(2+). N210 and N240 each carry an N-linked (GlcNAc...) asparagine glycan. The Ca(2+) site is built by D247, S250, and D255. N290 carries an N-linked (GlcNAc...) asparagine glycan.

The protein belongs to the peroxidase family. Classical plant (class III) peroxidase subfamily. It depends on heme b as a cofactor. Requires Ca(2+) as cofactor. In terms of tissue distribution, mainly expressed in roots.

The protein resides in the secreted. It catalyses the reaction 2 a phenolic donor + H2O2 = 2 a phenolic radical donor + 2 H2O. Removal of H(2)O(2), oxidation of toxic reductants, biosynthesis and degradation of lignin, suberization, auxin catabolism, response to environmental stresses such as wounding, pathogen attack and oxidative stress. These functions might be dependent on each isozyme/isoform in each plant tissue. The polypeptide is Peroxidase 30 (PER30) (Arabidopsis thaliana (Mouse-ear cress)).